Consider the following 185-residue polypeptide: MNSLQNHLLIATPMLNDPMFKRTVTYICEHNEEGAMGLVINQPADLSVTSLLDKLEIVYPENNQHLQGSVYQGGPVGRERGFVIHPPQDNWRASQKMSDDIMVTTSRDILEALGSSAAPPQFLLTLGYAGWEAGQLEEELGENSWLAIPADPELLFNTPPSERWQKATEQLGFDVWQLGPDVGHA.

It belongs to the UPF0301 (AlgH) family.

In Idiomarina loihiensis (strain ATCC BAA-735 / DSM 15497 / L2-TR), this protein is UPF0301 protein IL2218.